Consider the following 321-residue polypeptide: Probable DNA polymerase III subunit delta (321 aa).

This sequence belongs to the DNA polymerase HolA subunit family. In terms of assembly, component of the DNA clamp loading complex consisting of tau(3):delta(1):delta'(1). The DNA polymerase III holoenzyme complex contains at least 10 different subunits organized into 3 functionally essential subassemblies: the Pol III core, the beta sliding clamp processivity factor and the clamp-loading complex. The Pol III core (subunits alpha, epsilon and theta) contains the polymerase and the 3'-5' exonuclease proofreading activities. The polymerase is tethered to the template via the dimeric beta sliding clamp processivity factor. The DNA clamp-loading complex assembles the beta sliding clamp onto the primed template and plays a central role in the organization and communication at the replication fork.

The enzyme catalyses DNA(n) + a 2'-deoxyribonucleoside 5'-triphosphate = DNA(n+1) + diphosphate. In terms of biological role, part of the beta sliding clamp loading complex, which hydrolyzes ATP to load the beta clamp onto primed DNA to form the DNA replication pre-initiation complex. DNA polymerase III is a complex, multichain enzyme responsible for most of the replicative synthesis in bacteria. This DNA polymerase also exhibits 3'-5' exonuclease activity. The delta subunit is the wrench that will open the beta subunit dimer. The DNA clamp loading complex (tau(3),delta,delta') is thought to load beta dimers onto DNA by binding ATP which alters the complex's conformation so it can bind beta sliding clamp dimers and open them at one interface. Primed DNA is recognized, ATP is hydrolyzed releasing the clamp loading complex and closing the beta sliding clamp ring around the primed DNA. In Rickettsia prowazekii (strain Madrid E), this protein is Probable DNA polymerase III subunit delta.